A 3118-amino-acid chain; its full sequence is MPAATAGILLLLLLGTLEGSQTQRRQSQAHQQRGLFPAVLNLASNALITTNATCGEKGPEMYCKLVEHVPGQPVRNPQCRICNQNSSNPYQRHPITNAIDGKNTWWQSPSIKNGVEYHYVTITLDLQQVFQIAYVIVKAANSPRPGNWILERSLDDVEYKPWQYHAVTDTECLTLYNIYPRTGPPSYAKDDEVICTSFYSKIHPLENGEIHISLINGRPSADDPSPELLEFTSARYIRLRFQRIRTLNADLMMFAHKDPREIDPIVTRRYYYSVKDISVGGMCICYGHARACPLDPATNKSRCECEHNTCGESCDRCCPGFHQKPWRAGTFLTKSECEACNCHGKAEECYYDETVASRNLSLNIHGKYIGGGVCINCTHNTAGINCETCVDGFFRPKGVSPNYPRPCQPCHCDPTGSLSEVCVKDEKYAQRGLKPGSCHCKTGFGGVNCDRCVRGYHGYPDCQPCNCSGLGSTNEDPCVGPCSCKENVEGEDCSRCKSGFFNLQEDNQKGCEECFCSGVSNRCQSSYWTYGNIQDMRGWYLTDLSGRIRMAPQLDNPDSPQQISISNSEARKSLLDGYYWSAPPPYLGNRLPAVGGQLSFTISYDLEEEEDDTEKILQLMIIFEGNDLRISTAYKEVYLEPSEEHIEEVSLKEEAFTIHGTNLPVTRKDFMIVLTNLERVLMQITYNLGMDAIFRLSSVNLESAVPYPTDRRIATDVEVCQCPPGYSGSSCETCWPRHRRVNGTIFGGICEPCQCFAHAEACDDITGECLNCKDHTGGPYCNECLPGFYGDPTRGSPEDCQPCACPLNIPSNNFSPTCHLDRSLGLICDECPIGYTGPRCERCAEGYFGQPSIPGGSCQPCQCNDNLDYSIPGSCDSLSGSCLICKPGTTGRYCELCADGYFGDAVNAKNCQPCRCNINGSFSEICHTRTGQCECRPNVQGRHCDECKPETFGLQLGRGCLPCNCNSFGSKSFDCEASGQCWCQPGVAGKKCDRCAHGYFNFQEGGCIACDCSHLGNNCDPKTGQCICPPNTTGEKCSECLPNTWGHSIVTGCKVCNCSTVGSLASQCNVNTGQCSCHPKFSGMKCSECSRGHWNYPLCTLCDCFLPGTDATTCDLETRKCSCSDQTGQCSCKVNVEGVHCDRCRPGKFGLDAKNPLGCSSCYCFGVTSQCSEAKGLIRTWVTLSDEQTILPLVDEALQHTTTKGIAFQKPEIVAKMDEVRQELHLEPFYWKLPQQFEGKKLMAYGGKLKYAIYFEARDETGFATYKPQVIIRGGTPTHARIITRHMAAPLIGQLTRHEIEMTEKEWKYYGDDPRISRTVTREDFLDILYDIHYILIKATYGNVVRQSRISEISMEVAEPGHVLAGSPPAHLIERCDCPPGYSGLSCETCAPGFYRLRSEPGGRTPGPTLGTCVPCQCNGHSSQCDPETSVCQNCQHHTAGDFCERCALGYYGIVRGLPNDCQPCACPLISPSNNFSPSCVLEGLEDYRCTACPRGYEGQYCERCAPGYTGSPSSPGGSCQECECDPYGSLPVPCDRVTGLCTCRPGATGRKCDGCEHWHAREGAECVFCGDECTGLLLGDLARLEQMTMNINLTGPLPAPYKILYGLENTTQELKHLLSPQRAPERLIQLAEGNVNTLVMETNELLTRATKVTADGEQTGQDAERTNSRAESLEEFIKGLVQDAEAINEKAVQLNETLGNQDKTAERNLEELQKEIDRMLKELRSKDLQTQKEVAEDELVAAEGLLKRVNKLFGEPRAQNEDMEKDLQQKLAEYKNKLDDAWDLLREATDKTRDANRLSAANQKNMTILETKKEAIEGSKRQIENTLKEGNDILDEANRLLGEINSVIDYVDDIKTKLPPMSEELSDKIDDLAQEIKDRRLAEKVFQAESHAAQLNDSSAVLDGILDEAKNISFNATAAFRAYSNIKDYIDEAEKVAREAKELAQGATKLATSPQGLLKEDAKGSLQKSFRILNEAKKLANDVKGNHNDLNDLKTRLETADLRNSGLLGALNDTMDKLSAITNDTAAKLQAVKEKAREANDTAKAVLAQVKDLHQNLDGLKQNYNKLADSVAKTNAVVKDPSKNKIIADAGTSVRNLEQEADRLIDKLKPIKELEDNLKKNISEIKELINQARKQANSIKVSVSSGGDCVRTYRPEIKKGSYNNIVVHVKTAVADNLLFYLGSAKFIDFLAIEMRKGKVSFLWDVGSGVGRVEYPDLTIDDSYWYRIEASRTGRNGSISVRALDGPKASMVPSTYHSVSPPGYTILDVDANAMLFVGGLTGKIKKADAVRVITFTGCMGETYFDNKPIGLWNFREKEGDCKGCTVSPQVEDSEGTIQFDGEGYALVSRPIRWYPNISTVMFKFRTFSSSALLMYLATRDLKDFMSVELSDGHVKVSYDLGSGMTSVVSNQNHNDGKWKAFTLSRIQKQANISIVDIDSNQEENVATSSSGNNFGLDLKADDKIYFGGLPTLRNLSMKARPEVNVKKYSGCLKDIEISRTPYNILSSPDYVGVTKGCSLENVYTVSFPKPGFVELAAVSIDVGTEINLSFSTRNESGIILLGSGGTLTPPRRKRRQTTQAYYAIFLNKGRLEVHLSSGTRTMRKIVIKPEPNLFHDGREHSVHVERTRGIFTVQIDEDRRHMQNLTEEQPIEVKKLFVGGAPPEFQPSPLRNIPAFQGCVWNLVINSIPMDFAQPIAFKNADIGRCTYQKPREDESEAVPAEVIVQPQPVPTPAFPFPAPTMVHGPCVAESEPALLTGSKQFGLSRNSHIAIAFDDTKVKNRLTIELEVRTEAESGLLFYMARINHADFATVQLRNGFPYFSYDLGSGDTSTMIPTKINDGQWHKIKIVRVKQEGILYVDDASSQTISPKKADILDVVGILYVGGLPINYTTRRIGPVTYSLDGCVRNLHMEQAPVDLDQPTSSFHVGTCFANAESGTYFDGTGFAKAVGGFKVGLDLLVEFEFRTTRPTGVLLGVSSQKMDGMGIEMIDEKLMFHVDNGAGRFTAIYDAGIPGHMCNGQWHKVTAKKIKNRLELVVDGNQVDAQSPNSASTSADTNDPVFVGGFPGGLNQFGLTTNIRFRGCIRSLKLTKGTGKPLEVNFAKALELRGVQPVSCPTT.

Positions 1–19 (MPAATAGILLLLLLGTLEG) are cleaved as a signal peptide. The region spanning 31 to 282 (QQRGLFPAVL…SVKDISVGGM (252 aa)) is the Laminin N-terminal domain. N-linked (GlcNAc...) asparagine glycosylation is found at N51 and N85. Cystine bridges form between C283-C292, C285-C303, C305-C314, C317-C337, C340-C349, and C342-C374. 4 Laminin EGF-like domains span residues 283 to 339 (CICY…ECEA), 340 to 409 (CNCH…PCQP), 410 to 464 (CHCD…DCQP), and 465 to 513 (CNCS…GCEE). N299 is a glycosylation site (N-linked (GlcNAc...) asparagine). N359 and N376 each carry an N-linked (GlcNAc...) asparagine glycan. Cystine bridges form between C377-C386, C389-C407, C410-C422, C412-C438, C440-C449, C452-C462, C465-C478, C467-C482, C484-C493, and C496-C511. N-linked (GlcNAc...) asparagine glycosylation is present at N466. The region spanning 514 to 523 (CFCSGVSNRC) is the Laminin EGF-like 5; first part domain. One can recognise a Laminin IV type A 1 domain in the interval 527 to 719 (YWTYGNIQDM…DRRIATDVEV (193 aa)). In terms of domain architecture, Laminin EGF-like 5; second part spans 720–752 (CQCPPGYSGSSCETCWPRHRRVNGTIFGGICEP). N742 is a glycosylation site (N-linked (GlcNAc...) asparagine). Cystine bridges form between C753–C762, C755–C769, C772–C781, C784–C800, C803–C818, C805–C828, C831–C840, C843–C858, C861–C875, C863–C882, C885–C894, C897–C911, C914–C926, C916–C933, C935–C944, C947–C960, C963–C975, C965–C981, C983–C992, C995–C1007, C1010–C1019, C1012–C1026, C1028–C1037, C1040–C1053, C1056–C1068, C1058–C1075, C1077–C1086, C1089–C1099, C1102–C1114, C1104–C1130, C1132–C1141, and C1144–C1159. Laminin EGF-like domains follow at residues 753–802 (CQCF…DCQP), 803–860 (CACP…SCQP), 861–913 (CQCN…NCQP), 914–962 (CRCN…GCLP), 963–1009 (CNCN…GCIA), 1010–1055 (CDCS…GCKV), 1056–1101 (CNCS…LCTL), and 1102–1161 (CDCF…GCSS). An N-linked (GlcNAc...) asparagine glycan is attached at N919. N1031 is a glycosylation site (N-linked (GlcNAc...) asparagine). N-linked (GlcNAc...) asparagine glycosylation occurs at N1057. The 10-residue stretch at 1162-1171 (CYCFGVTSQC) folds into the Laminin EGF-like 14; first part domain. Residues 1172 to 1375 (SEAKGLIRTW…GSPPAHLIER (204 aa)) enclose the Laminin IV type A 2 domain. In terms of domain architecture, Laminin EGF-like 14; second part spans 1376–1415 (CDCPPGYSGLSCETCAPGFYRLRSEPGGRTPGPTLGTCVP). 13 disulfides stabilise this stretch: C1378–C1387, C1416–C1425, C1418–C1432, C1435–C1444, C1447–C1462, C1465–C1480, C1467–C1490, C1493–C1502, C1505–C1520, C1523–C1535, C1525–C1542, C1544–C1553, and C1556–C1567. Laminin EGF-like domains lie at 1416 to 1464 (CQCN…DCQP), 1465 to 1522 (CACP…SCQE), and 1523 to 1569 (CECD…ECVF). Residues 1570–2140 (CGDECTGLLL…NQARKQANSI (571 aa)) form a domain II and I region. Residues N1593, N1610, N1696, N1806, N1897, N1912, N1916, N2013, N2024, N2041, N2122, and N2236 are each glycosylated (N-linked (GlcNAc...) asparagine). Residues 1662–1863 (QDAERTNSRA…DIKTKLPPMS (202 aa)) are a coiled coil. The stretch at 1923–2146 (AYSNIKDYID…ANSIKVSVSS (224 aa)) forms a coiled coil. Laminin G-like domains lie at 2141 to 2324 (KVSV…CKGC), 2336 to 2517 (TIQF…TKGC), 2522 to 2706 (VYTV…IGRC), 2759 to 2930 (SKQF…VGTC), and 2929 to 3115 (TCFA…PVSC). A disulfide bond links C2298 and C2324. 3 N-linked (GlcNAc...) asparagine glycosylation sites follow: N2356, N2431, and N2474. C2491 and C2517 form a disulfide bridge. 3 N-linked (GlcNAc...) asparagine glycosylation sites follow: N2547, N2554, and N2644. A disulfide bridge links C2679 with C2706. N-linked (GlcNAc...) asparagine glycosylation occurs at N2889. Intrachain disulfides connect C2905/C2930 and C3083/C3115.

In terms of assembly, laminin is a complex glycoprotein, consisting of three different polypeptide chains (alpha, beta, gamma), which are bound to each other by disulfide bonds into a cross-shaped molecule comprising one long and three short arms with globules at each end. Alpha-2 is a subunit of laminin-2 (laminin-211 or merosin), laminin-4 (laminin-221 or S-merosin) and laminin-12 (laminin-213). Interacts with FBLN1, FBLN2 and NID2.

The protein resides in the secreted. Its subcellular location is the extracellular space. The protein localises to the extracellular matrix. It is found in the basement membrane. In terms of biological role, binding to cells via a high affinity receptor, laminin is thought to mediate the attachment, migration and organization of cells into tissues during embryonic development by interacting with other extracellular matrix components. In Mus musculus (Mouse), this protein is Laminin subunit alpha-2 (Lama2).